Consider the following 597-residue polypeptide: Vacuolar protein sorting-associated protein 33A (597 aa).

This sequence belongs to the STXBP/unc-18/SEC1 family. As to quaternary structure, core component of at least two putative endosomal tethering complexes, the homotypic fusion and vacuole protein sorting (HOPS) complex and the class C core vacuole/endosome tethering (CORVET) complex. Their common core is composed of the class C Vps proteins VPS11, VPS16, VPS18 and VPS33A, which in HOPS further associates with VPS39 and VPS41 and in CORVET with VPS8 and TGFBRAP1. Interacts with RAB5C, UVRAG, STX17, MON1A and MON1B. Associates with adaptor protein complex 3 (AP-3) and clathrin. Interacts with PLEKHM1. As to expression, ubiquitous.

It localises to the cytoplasmic vesicle. The protein resides in the late endosome membrane. Its subcellular location is the lysosome membrane. It is found in the early endosome. The protein localises to the autophagosome. It localises to the clathrin-coated vesicle. In terms of biological role, plays a role in vesicle-mediated protein trafficking to lysosomal compartments including the endocytic membrane transport and autophagic pathways. Believed to act as a core component of the putative HOPS and CORVET endosomal tethering complexes which are proposed to be involved in the Rab5-to-Rab7 endosome conversion probably implicating MON1A/B, and via binding SNAREs and SNARE complexes to mediate tethering and docking events during SNARE-mediated membrane fusion. The HOPS complex is proposed to be recruited to Rab7 on the late endosomal membrane and to regulate late endocytic, phagocytic and autophagic traffic towards lysosomes. The CORVET complex is proposed to function as a Rab5 effector to mediate early endosome fusion probably in specific endosome subpopulations. Required for fusion of endosomes and autophagosomes with lysosomes; the function is dependent on its association with VPS16 but not VIPAS39. The function in autophagosome-lysosome fusion implicates STX17 but not UVRAG. The sequence is that of Vacuolar protein sorting-associated protein 33A (Vps33a) from Rattus norvegicus (Rat).